The sequence spans 93 residues: MRKDIHPNYQEVLFHDTNADVFFLTRSTVKTKTTREYEGSEYPYYPLDISSASHPFYTGEQRKTSTEGRVASFNKRFGAFGGRKKAADADAAE.

This sequence belongs to the bacterial ribosomal protein bL31 family. Type B subfamily. Part of the 50S ribosomal subunit.

This chain is Large ribosomal subunit protein bL31B, found in Psychrobacter cryohalolentis (strain ATCC BAA-1226 / DSM 17306 / VKM B-2378 / K5).